Here is a 667-residue protein sequence, read N- to C-terminus: tRNA 5-methylaminomethyl-2-thiouridine biosynthesis bifunctional protein MnmC (667 aa).

Residues methionine 1–asparagine 215 form a tRNA (mnm(5)s(2)U34)-methyltransferase region. The FAD-dependent cmnm(5)s(2)U34 oxidoreductase stretch occupies residues isoleucine 240–lysine 667.

The protein in the N-terminal section; belongs to the methyltransferase superfamily. tRNA (mnm(5)s(2)U34)-methyltransferase family. It in the C-terminal section; belongs to the DAO family. FAD serves as cofactor.

It localises to the cytoplasm. It carries out the reaction 5-aminomethyl-2-thiouridine(34) in tRNA + S-adenosyl-L-methionine = 5-methylaminomethyl-2-thiouridine(34) in tRNA + S-adenosyl-L-homocysteine + H(+). Its function is as follows. Catalyzes the last two steps in the biosynthesis of 5-methylaminomethyl-2-thiouridine (mnm(5)s(2)U) at the wobble position (U34) in tRNA. Catalyzes the FAD-dependent demodification of cmnm(5)s(2)U34 to nm(5)s(2)U34, followed by the transfer of a methyl group from S-adenosyl-L-methionine to nm(5)s(2)U34, to form mnm(5)s(2)U34. The polypeptide is tRNA 5-methylaminomethyl-2-thiouridine biosynthesis bifunctional protein MnmC (Campylobacter hominis (strain ATCC BAA-381 / DSM 21671 / CCUG 45161 / LMG 19568 / NCTC 13146 / CH001A)).